The following is a 280-amino-acid chain: Ribonuclease Z (280 aa).

The Zn(2+) site is built by histidine 61, histidine 63, aspartate 65, histidine 66, histidine 153, aspartate 176, and histidine 240. Aspartate 65 acts as the Proton acceptor in catalysis.

The protein belongs to the RNase Z family. Homodimer. Zn(2+) serves as cofactor.

The catalysed reaction is Endonucleolytic cleavage of RNA, removing extra 3' nucleotides from tRNA precursor, generating 3' termini of tRNAs. A 3'-hydroxy group is left at the tRNA terminus and a 5'-phosphoryl group is left at the trailer molecule.. In terms of biological role, zinc phosphodiesterase, which displays some tRNA 3'-processing endonuclease activity. Probably involved in tRNA maturation, by removing a 3'-trailer from precursor tRNA. This Mycobacterium avium (strain 104) protein is Ribonuclease Z.